The chain runs to 519 residues: Methionine--tRNA ligase (519 aa).

Positions 11 to 21 (AYPNAAPHVGH) match the 'HIGH' region motif. The 'KMSKS' region signature appears at 299–303 (KMSKS). Lys302 serves as a coordination point for ATP. The interval 500-519 (LPPPTGVFPRYQPPQPPEGK) is disordered.

It belongs to the class-I aminoacyl-tRNA synthetase family. MetG type 2B subfamily. In terms of assembly, monomer.

The protein resides in the cytoplasm. It catalyses the reaction tRNA(Met) + L-methionine + ATP = L-methionyl-tRNA(Met) + AMP + diphosphate. Is required not only for elongation of protein synthesis but also for the initiation of all mRNA translation through initiator tRNA(fMet) aminoacylation. The sequence is that of Methionine--tRNA ligase (metG) from Mycobacterium tuberculosis (strain CDC 1551 / Oshkosh).